The following is a 136-amino-acid chain: Protein NrdI (136 aa).

The protein belongs to the NrdI family.

Its function is as follows. Probably involved in ribonucleotide reductase function. This Salmonella arizonae (strain ATCC BAA-731 / CDC346-86 / RSK2980) protein is Protein NrdI.